Reading from the N-terminus, the 297-residue chain is MKRPDYRTLQALDAVIRERGFERAAQKLCITQSAVSQRIKQLENLFGQPLLVRTVPPRPTEQGQKLLALLHQVELLEEEWLGNDTGIDTPLLLSLAVNADSLATWLLPALKPVLTDSPIRLNLQVEDETRTQERLRRGEVVGAVSIQPQPLPSCLVDQLGALDYLFVASKGFAERYFPNGVTRSALLKAPAVAFDHLDDMHQAFLQQNFDLSPGSVPCHIVNSSEAFVQLARQGTTCCMIPHLQIEKELASGELIDLTPGLFQRRMLFWHRFAPESRMMRKVTDALLEHGRQVLRQD.

One can recognise an HTH lysR-type domain in the interval 4 to 60 (PDYRTLQALDAVIRERGFERAAQKLCITQSAVSQRIKQLENLFGQPLLVRTVPPRPT). The segment at residues 21 to 40 (FERAAQKLCITQSAVSQRIK) is a DNA-binding region (H-T-H motif).

Belongs to the LysR transcriptional regulatory family. In terms of assembly, homodimer.

In terms of biological role, controls the transcription of genes involved in arginine and lysine metabolism. The polypeptide is HTH-type transcriptional regulator ArgP (Serratia proteamaculans (strain 568)).